Reading from the N-terminus, the 23-residue chain is Unknown protein NF016 from 2D-PAGE (23 aa).

The protein is Unknown protein NF016 from 2D-PAGE of Naegleria fowleri (Brain eating amoeba).